Here is a 315-residue protein sequence, read N- to C-terminus: Aspartate carbamoyltransferase catalytic subunit (315 aa).

Residues Arg-65 and Thr-66 each contribute to the carbamoyl phosphate site. Lys-93 is a binding site for L-aspartate. Residues Arg-115, His-143, and Gln-146 each coordinate carbamoyl phosphate. L-aspartate contacts are provided by Arg-176 and Arg-231. Carbamoyl phosphate-binding residues include Gly-272 and Pro-273.

The protein belongs to the aspartate/ornithine carbamoyltransferase superfamily. ATCase family. In terms of assembly, heterododecamer (2C3:3R2) of six catalytic PyrB chains organized as two trimers (C3), and six regulatory PyrI chains organized as three dimers (R2).

The catalysed reaction is carbamoyl phosphate + L-aspartate = N-carbamoyl-L-aspartate + phosphate + H(+). The protein operates within pyrimidine metabolism; UMP biosynthesis via de novo pathway; (S)-dihydroorotate from bicarbonate: step 2/3. In terms of biological role, catalyzes the condensation of carbamoyl phosphate and aspartate to form carbamoyl aspartate and inorganic phosphate, the committed step in the de novo pyrimidine nucleotide biosynthesis pathway. This is Aspartate carbamoyltransferase catalytic subunit from Hyphomonas neptunium (strain ATCC 15444).